We begin with the raw amino-acid sequence, 156 residues long: Small ribosomal subunit protein uS7 (156 aa).

It belongs to the universal ribosomal protein uS7 family. Part of the 30S ribosomal subunit. Contacts proteins S9 and S11.

Its function is as follows. One of the primary rRNA binding proteins, it binds directly to 16S rRNA where it nucleates assembly of the head domain of the 30S subunit. Is located at the subunit interface close to the decoding center, probably blocks exit of the E-site tRNA. The sequence is that of Small ribosomal subunit protein uS7 from Synechococcus sp. (strain JA-2-3B'a(2-13)) (Cyanobacteria bacterium Yellowstone B-Prime).